The sequence spans 442 residues: Putative pyrimidine permease RutG (442 aa).

Residues 1 to 57 (MAMFGFPHWQLKSTSTESGVVAPDERLPFAQTAVMGVQHAVAMFGATVLMPILMGLD) are Cytoplasmic-facing. The helical transmembrane segment at 58-78 (PNLSILMSGIGTLLFFFITGG) threads the bilayer. R79 is a topological domain (periplasmic). Residues 80–100 (VPSYLGSSAAFVGVVIAATGF) form a helical membrane-spanning segment. At 101-110 (NGQGINPNIS) the chain is on the cytoplasmic side. The chain crosses the membrane as a helical span at residues 111 to 131 (IALGGIIACGLVYTVIGLVVM). Over 132–140 (KIGTRWIER) the chain is Periplasmic. The helical transmembrane segment at 141–161 (LMPPVVTGAVVMAIGLNLAPI) threads the bilayer. Topologically, residues 162-169 (AVKSVSAS) are cytoplasmic. The helical transmembrane segment at 170–190 (AFDSWMAVMTVLCIGLVAVFT) threads the bilayer. At 191–196 (RGMIQR) the chain is on the periplasmic side. A helical membrane pass occupies residues 197–217 (LLILVGLIVACLLYGVMTNVL). At 218–240 (GLGKAVDFTLVSHAAWFGLPHFS) the chain is on the cytoplasmic side. A helical transmembrane segment spans residues 241 to 261 (TPAFNGQAMMLIAPVAVILVA). Residues 262 to 284 (ENLGHLKAVAGMTGRNMDPYMGR) are Periplasmic-facing. A helical membrane pass occupies residues 285 to 305 (AFVGDGLATMLSGSVGGSGVT). Residues 306–318 (TYAENIGVMAVTK) lie on the Cytoplasmic side of the membrane. A helical transmembrane segment spans residues 319-339 (VYSTLVFVAAAVIAMLLGFSP). Residues 340–347 (KFGALIHT) lie on the Periplasmic side of the membrane. A helical transmembrane segment spans residues 348–368 (IPAAVIGGASIVVFGLIAVAG). Over 369 to 385 (ARIWVQNRVDLSQNGNL) the chain is Cytoplasmic. Transmembrane regions (helical) follow at residues 386–406 (IMVA…LGGF) and 407–427 (TLGG…LLSR). The Cytoplasmic portion of the chain corresponds to 428-442 (KLVDVPPPEVVHQEP).

The protein belongs to the nucleobase:cation symporter-2 (NCS2) (TC 2.A.40) family.

Its subcellular location is the cell inner membrane. Its function is as follows. May function as a proton-driven pyrimidine uptake system. This is Putative pyrimidine permease RutG (rutG) from Escherichia coli (strain K12).